The sequence spans 173 residues: Alpha-crystallin A chain (173 aa).

N-acetylmethionine is present on Met-1. A required for complex formation with BFSP1 and BFSP2 region spans residues 1 to 63 (MDVTIQHPWF…RTVLDSGISE (63 aa)). Gln-6 carries the deamidated glutamine; partial modification. Ser-45 bears the Phosphoserine mark. Gln-50 is subject to Deamidated glutamine; partial. Residues 52 to 162 (LFRTVLDSGI…GPSERAIPVS (111 aa)) enclose the sHSP domain. N6-acetyllysine occurs at positions 70 and 99. Positions 100, 102, and 107 each coordinate Zn(2+). Residues 145–173 (KVASGLDAGPSERAIPVSREEKPSSAPSS) are disordered. The O-linked (GlcNAc) serine glycan is linked to Ser-162.

The protein belongs to the small heat shock protein (HSP20) family. Heteromer composed of three CRYAA and one CRYAB subunits. Zinc coordination is achieved at least by His-100, Glu-102 and His-107. His-100 and Glu-102 come from the same molecule within the oligomer, while His-107 residue is provided by another molecule. Inter-subunit bridging via zinc ions enhances stability, which is crucial as there is no protein turn over in the lens. Can also form homodimers and homotetramers (dimers of dimers) which serve as the building blocks of homooligomers. Part of a complex required for lens intermediate filament formation composed of BFSP1, BFSP2 and CRYAA. In terms of processing, acetylation at Lys-70 may increase chaperone activity. Undergoes age-dependent proteolytical cleavage at the C-terminus.

It localises to the cytoplasm. It is found in the nucleus. Its function is as follows. Contributes to the transparency and refractive index of the lens. Acts as a chaperone, preventing aggregation of various proteins under a wide range of stress conditions. Required for the correct formation of lens intermediate filaments as part of a complex composed of BFSP1, BFSP2 and CRYAA. This chain is Alpha-crystallin A chain (CRYAA), found in Erinaceus europaeus (Western European hedgehog).